We begin with the raw amino-acid sequence, 1285 residues long: Dermonecrotic toxin (1285 aa).

The chain crosses the membrane as a helical span at residues 402 to 422 (MLVPAVGIPINFALSATALGL).

Its subcellular location is the cytoplasm. It is found in the secreted. The protein localises to the host membrane. Its function is as follows. This is a dermonecrotic toxin. This osteolytic toxin, induces bone resorption. Potent mitogen. This toxin is associated with the severe progressive form of the atrophic rhinitis, a major respiratory disease in pigs. This Pasteurella multocida protein is Dermonecrotic toxin (toxA).